The primary structure comprises 305 residues: UPF0612 protein C337.02c (305 aa).

Coiled-coil stretches lie at residues 27 to 63 (IERYERSVDSTLLEIDENKREALEKNILRKDRKMKYE) and 120 to 207 (NDMN…DARS).

The protein belongs to the UPF0612 family.

In Schizosaccharomyces pombe (strain 972 / ATCC 24843) (Fission yeast), this protein is UPF0612 protein C337.02c.